We begin with the raw amino-acid sequence, 293 residues long: NAD-dependent protein deacetylase (293 aa).

The 284-residue stretch at 1-284 (MTVAITQTGP…QPPDPLHTAT (284 aa)) folds into the Deacetylase sirtuin-type domain. Residues 27–47 (GAGCSTDSGIPDYRDLHGGWK) and 105–108 (QNVD) each bind NAD(+). His123 functions as the Proton acceptor in the catalytic mechanism. Cys131, Cys134, Cys182, and Cys185 together coordinate Zn(2+). NAD(+) is bound by residues 222 to 224 (GSS), 248 to 250 (NFG), and Cys266.

This sequence belongs to the sirtuin family. Class II subfamily. It depends on Zn(2+) as a cofactor.

It localises to the cytoplasm. It carries out the reaction N(6)-acetyl-L-lysyl-[protein] + NAD(+) + H2O = 2''-O-acetyl-ADP-D-ribose + nicotinamide + L-lysyl-[protein]. NAD-dependent protein deacetylase which modulates the activities of several enzymes which are inactive in their acetylated form. This is NAD-dependent protein deacetylase from Xanthomonas campestris pv. campestris (strain B100).